The following is a 225-amino-acid chain: 3-dehydroquinate dehydratase (225 aa).

3-dehydroquinate is bound by residues 30–32 (EWR) and Arg62. Residue His118 is the Proton donor/acceptor of the active site. The active-site Schiff-base intermediate with substrate is the Lys143. Residues Arg186, Ser205, and Gln209 each contribute to the 3-dehydroquinate site.

The protein belongs to the type-I 3-dehydroquinase family. In terms of assembly, homodimer.

The catalysed reaction is 3-dehydroquinate = 3-dehydroshikimate + H2O. Its pathway is metabolic intermediate biosynthesis; chorismate biosynthesis; chorismate from D-erythrose 4-phosphate and phosphoenolpyruvate: step 3/7. Functionally, involved in the third step of the chorismate pathway, which leads to the biosynthesis of aromatic amino acids. Catalyzes the cis-dehydration of 3-dehydroquinate (DHQ) and introduces the first double bond of the aromatic ring to yield 3-dehydroshikimate. This chain is 3-dehydroquinate dehydratase, found in Streptococcus thermophilus (strain ATCC BAA-491 / LMD-9).